A 539-amino-acid polypeptide reads, in one-letter code: 4-hydroxybenzoate--CoA/benzoate--CoA ligase (539 aa).

The protein belongs to the ATP-dependent AMP-binding enzyme family. Benzoate-CoA ligase subfamily. Homodimer. The N-terminus is blocked.

It carries out the reaction 4-hydroxybenzoate + ATP + CoA = 4-hydroxybenzoyl-CoA + AMP + diphosphate. The catalysed reaction is benzoate + ATP + CoA = benzoyl-CoA + AMP + diphosphate. Its function is as follows. Catalyzes the ligation of 4-hydroxybenzoate, benzoate or cyclohex-1,4-dienecarboxylate and CoA at the expense of ATP. The enzyme shows low activity towards cyclo-2,5-dienecarboxylate, 4-fluorobenzoate, 4-chlorobenzoate and 2-methoxybenzoate. This Rhodopseudomonas palustris (strain ATCC BAA-98 / CGA009) protein is 4-hydroxybenzoate--CoA/benzoate--CoA ligase (hbaA).